Consider the following 77-residue polypeptide: Acyl carrier protein (77 aa).

A Carrier domain is found at 1 to 76; sequence MENFDKVKDI…DAVKYINSLE (76 aa). The residue at position 36 (S36) is an O-(pantetheine 4'-phosphoryl)serine.

Belongs to the acyl carrier protein (ACP) family. Post-translationally, 4'-phosphopantetheine is transferred from CoA to a specific serine of apo-ACP by AcpS. This modification is essential for activity because fatty acids are bound in thioester linkage to the sulfhydryl of the prosthetic group.

The protein localises to the cytoplasm. Its pathway is lipid metabolism; fatty acid biosynthesis. Functionally, carrier of the growing fatty acid chain in fatty acid biosynthesis. The protein is Acyl carrier protein of Staphylococcus epidermidis (strain ATCC 12228 / FDA PCI 1200).